A 123-amino-acid polypeptide reads, in one-letter code: Fluoride-specific ion channel FluC (123 aa).

A run of 4 helical transmembrane segments spans residues 1-21, 32-52, 66-86, and 94-114; these read MQWL…GWLA, LGTL…LVWF, FVIT…AEVF, and LLAA…ATAL. Na(+) contacts are provided by glycine 73 and threonine 76.

This sequence belongs to the fluoride channel Fluc/FEX (TC 1.A.43) family.

It localises to the cell inner membrane. It catalyses the reaction fluoride(in) = fluoride(out). With respect to regulation, na(+) is not transported, but it plays an essential structural role and its presence is essential for fluoride channel function. In terms of biological role, fluoride-specific ion channel. Important for reducing fluoride concentration in the cell, thus reducing its toxicity. This chain is Fluoride-specific ion channel FluC, found in Psychrobacter arcticus (strain DSM 17307 / VKM B-2377 / 273-4).